The primary structure comprises 343 residues: Transmembrane protein 120A (343 aa).

The Cytoplasmic portion of the chain corresponds to 1–132 (MQSPPPDPLG…KQAKFAYKDE (132 aa)). Position 130 (Lys130) interacts with CoA. The chain crosses the membrane as a helical span at residues 133 to 152 (YEKFKLYLTIILIVISFTCR). Over 153–158 (FLLNSR) the chain is Extracellular. A helical transmembrane segment spans residues 159–177 (VTDAAFNFLLVWYYCTLTI). Residues 178–190 (RESILINNGSRIK) lie on the Cytoplasmic side of the membrane. Residues Ser187 and Arg188 each coordinate CoA. A helical transmembrane segment spans residues 191–209 (GWWVFHHYVSTFLSGVMLT). Over 210–218 (WPDGLMYQK) the chain is Extracellular. The helical transmembrane segment at 219-240 (FRNQFLSFSMYQSFVQFLQYYY) threads the bilayer. The CoA site is built by Gln237, Tyr240, Gln241, and His283. At 241–270 (QSGCLYRLRALGERHTMDLTVEGFQSWMWR) the chain is on the cytoplasmic side. Residues 271 to 294 (GLTFLLPFLFFGHFWQLFNALTLF) form a helical membrane-spanning segment. At 295 to 304 (NLARDPECKE) the chain is on the extracellular side. Residues 305–330 (WQVLMCGLPFLLLFLGNFFTTLRVVH) traverse the membrane as a helical segment. Residues 331–343 (QKFHSQQHGSKKD) lie on the Cytoplasmic side of the membrane. Lys332 is a binding site for CoA.

Belongs to the TMEM120 family. In terms of assembly, homodimer. Forms heterooligomer with TMEM120B. Interacts with PKD2; TMEM120A inhibits PKD2 channel activity through the physical association of PKD2 with TMEM120A.

Its subcellular location is the cell membrane. The protein resides in the nucleus inner membrane. It is found in the endoplasmic reticulum. In terms of biological role, multifunctional protein involved in mechanosensation, and plays an essential role in lipid metabolism and adipocyte differentiation. May function as a potential ion channel involved in sensing mechanical stimuli. Mediates the mechanosensitivity of the PKD2-TMEM120A channel complex through direct physical interaction. TMEM120A seems to affect mechanosensation by inhibiting PIEZO2 channels, possibly by altering cellular lipid content. TMEM120A is structurally similar to a lipid-modifying enzyme, ELOVL7, and contains a bound coenzyme A molecule, which suggests it might function as an enzyme in lipid metabolism. Additionnaly, implicated in innate immune response against Zika virus. Acts as a key activator of the antiviral signaling involving STING1. This chain is Transmembrane protein 120A, found in Rattus norvegicus (Rat).